The sequence spans 247 residues: Terpene cyclase ausL (247 aa).

Helical transmembrane passes span 49–69, 75–95, 114–134, 138–158, 171–191, and 206–226; these read AIAV…AWIY, HWQG…AATL, LVLL…CLAL, GALG…SGAV, SLVI…KLCI, and PMCW…PVLY.

This sequence belongs to the paxB family.

Its subcellular location is the membrane. Its pathway is secondary metabolite biosynthesis; terpenoid biosynthesis. Functionally, terpene cyclase; part of the gene cluster that mediates the biosynthesis of calidodehydroaustin, a fungal meroterpenoid. The first step of the pathway is the synthesis of 3,5-dimethylorsellinic acid by the polyketide synthase ausA. 3,5-dimethylorsellinic acid is then prenylated by the polyprenyl transferase ausN. Further epoxidation by the FAD-dependent monooxygenase ausM and cyclization by the probable terpene cyclase ausL lead to the formation of protoaustinoid A. Protoaustinoid A is then oxidized to spiro-lactone preaustinoid A3 by the combined action of the FAD-binding monooxygenases ausB and ausC, and the dioxygenase ausE. Acid-catalyzed keto-rearrangement and ring contraction of the tetraketide portion of preaustinoid A3 by ausJ lead to the formation of preaustinoid A4. The aldo-keto reductase ausK, with the help of ausH, is involved in the next step by transforming preaustinoid A4 into isoaustinone which is in turn hydroxylated by the P450 monooxygenase ausI to form austinolide. The cytochrome P450 monooxygenase ausG modifies austinolide to austinol. Austinol is further acetylated to austin by the O-acetyltransferase ausP, which spontaneously changes to dehydroaustin. The cytochrome P450 monooxygenase ausR then converts dehydroaustin is into 7-dehydrodehydroaustin. The hydroxylation catalyzed by ausR permits the O-acetyltransferase ausQ to add an additional acetyl group to the molecule, leading to the formation of acetoxydehydroaustin. The short chain dehydrogenase ausT catalyzes the reduction of the double bond present between carbon atoms 1 and 2 to convert 7-dehydrodehydroaustin into 1,2-dihydro-7-hydroxydehydroaustin. AusQ catalyzes not only an acetylation reaction but also the addition of the PKS ausV diketide product to 1,2-dihydro-7-hydroxydehydroaustin, forming precalidodehydroaustin. Finally, the iron/alpha-ketoglutarate-dependent dioxygenase converts precalidodehydroaustin into calidodehydroaustin. This is Terpene cyclase ausL from Aspergillus calidoustus.